The sequence spans 441 residues: Protein translocase subunit SecY (441 aa).

Helical transmembrane passes span 18-38 (ILFT…PSPG), 78-98 (AVGV…TVVI), 124-144 (IALA…GGLL), 157-177 (IFTL…VMWM), 180-200 (LITE…GIAA), 215-235 (GVVF…VVFV), 272-292 (VIPV…TQLI), 318-338 (LVYI…YVSI), 382-402 (IYLG…AGGT), and 403-423 (VQNL…GLDT).

Belongs to the SecY/SEC61-alpha family. As to quaternary structure, component of the Sec protein translocase complex. Heterotrimer consisting of SecY, SecE and SecG subunits. The heterotrimers can form oligomers, although 1 heterotrimer is thought to be able to translocate proteins. Interacts with the ribosome. Interacts with SecDF, and other proteins may be involved. Interacts with SecA.

The protein resides in the cell membrane. The central subunit of the protein translocation channel SecYEG. Consists of two halves formed by TMs 1-5 and 6-10. These two domains form a lateral gate at the front which open onto the bilayer between TMs 2 and 7, and are clamped together by SecE at the back. The channel is closed by both a pore ring composed of hydrophobic SecY resides and a short helix (helix 2A) on the extracellular side of the membrane which forms a plug. The plug probably moves laterally to allow the channel to open. The ring and the pore may move independently. The polypeptide is Protein translocase subunit SecY (Mycobacterium bovis (strain ATCC BAA-935 / AF2122/97)).